Here is a 423-residue protein sequence, read N- to C-terminus: UPF0229 protein VP0986 (423 aa).

The disordered stretch occupies residues 69–112; that stretch reads GGVRERVHPGNDQFITGDKIERPKGGGQGSGSGEGNASPDGEGQ. The segment covering 93–102 has biased composition (gly residues); the sequence is GGGQGSGSGE.

The protein belongs to the UPF0229 family.

This Vibrio parahaemolyticus serotype O3:K6 (strain RIMD 2210633) protein is UPF0229 protein VP0986.